Here is a 1026-residue protein sequence, read N- to C-terminus: Translation initiation factor IF-2, chloroplastic (1026 aa).

A chloroplast-targeting transit peptide spans 1-63 (MPSMLVLVGT…KKWLCRYSVS (63 aa)). Residues 158–173 (AEKLEIPKPGNKEGGE) are compositionally biased toward basic and acidic residues. Disordered stretches follow at residues 158-208 (AEKL…TMKS), 230-284 (FNRG…PPVK), and 300-393 (VSEE…KWSK). Residues 178 to 194 (SQPSANSSNSRNGSYAN) show a composition bias toward polar residues. The segment covering 254-269 (LAPPQPPFRPQPPVRP) has biased composition (pro residues). The span at 306–317 (SSVKSKERKPIL) shows a compositional bias: basic and acidic residues. The segment covering 384 to 393 (SGRKGRKWSK) has biased composition (basic residues). Residues 499 to 672 (DRPPVITIMG…MLVAELQELK (174 aa)) form the tr-type G domain. The segment at 508–515 (GHVDHGKT) is G1. 508-515 (GHVDHGKT) lines the GTP pocket. The interval 533–537 (GITQG) is G2. The interval 558-561 (DTPG) is G3. Residues 558–562 (DTPGH) and 612–615 (NKID) each bind GTP. The segment at 612–615 (NKID) is G4. A G5 region spans residues 648–650 (SAL).

It belongs to the TRAFAC class translation factor GTPase superfamily. Classic translation factor GTPase family. IF-2 subfamily.

The protein localises to the plastid. Its subcellular location is the chloroplast. Its function is as follows. One of the essential components for the initiation of protein synthesis. Protects formylmethionyl-tRNA from spontaneous hydrolysis and promotes its binding to the 30S ribosomal subunits. Also involved in the hydrolysis of GTP during the formation of the 70S ribosomal complex. The polypeptide is Translation initiation factor IF-2, chloroplastic (Arabidopsis thaliana (Mouse-ear cress)).